The sequence spans 277 residues: Indole-3-glycerol phosphate synthase (277 aa).

Belongs to the TrpC family.

It carries out the reaction 1-(2-carboxyphenylamino)-1-deoxy-D-ribulose 5-phosphate + H(+) = (1S,2R)-1-C-(indol-3-yl)glycerol 3-phosphate + CO2 + H2O. It functions in the pathway amino-acid biosynthesis; L-tryptophan biosynthesis; L-tryptophan from chorismate: step 4/5. This is Indole-3-glycerol phosphate synthase (trpC) from Pseudomonas putida (Arthrobacter siderocapsulatus).